A 597-amino-acid polypeptide reads, in one-letter code: Siderophore iron transporter 2 (597 aa).

S46 carries the post-translational modification Phosphoserine. A run of 14 helical transmembrane segments spans residues 65–85, 97–117, 131–151, 159–179, 190–210, 225–245, 281–301, 312–332, 357–377, 390–410, 419–439, 448–468, 485–505, and 558–578; these read IIVAYLGLYLLSFASSLEQQT, FSAHSNLATINLVGNILLAVV, SESLSLALGMTVLGYLSLAFS, VAYILYICGQTGLGLLSQLII, ILSAIPELPYLATVWIGPVLA, YGIWAFILPTVSLPLLASLFL, LDGLGIVLFVSGFTLLLLPFS, TILTLFTITLSIALLVTLCFY, VLIFTYFMSYYIFSNFLTSFL, LTLNVFVFSMTTTAILSGFLM, LLMISVPMYVLGILGIILFGI, LVLVLILAGMGGGLLTLSAQI, LYLTFSSVGGAFGSAIAGGVW, and KDLFHISLVASLFMFAGLVII.

It belongs to the major facilitator superfamily.

It localises to the membrane. In terms of biological role, involved in the transport of siderophore iron and so has a role in iron homeostasis. This is Siderophore iron transporter 2 (str2) from Schizosaccharomyces pombe (strain 972 / ATCC 24843) (Fission yeast).